We begin with the raw amino-acid sequence, 487 residues long: Histamine H1 receptor (487 aa).

At 1-29 (MSLPNSSCLLEDKMCESNKTTMASPQLMP) the chain is on the extracellular side. Asn-5 and Asn-18 each carry an N-linked (GlcNAc...) asparagine glycan. The chain crosses the membrane as a helical span at residues 30–50 (LVVVLSTICLVTVGLNLLVLY). The Cytoplasmic segment spans residues 51–64 (AVRSERKLHTVGNL). The chain crosses the membrane as a helical span at residues 65 to 89 (YIVSLSVADLIVGAVVMPMNILYLL). Over 90-97 (MSKWSLGR) the chain is Extracellular. A helical transmembrane segment spans residues 98 to 123 (PLCLFWLSMDYVASTASIFSVFILCI). Cys-100 and Cys-180 form a disulfide bridge. Positions 107 and 112 each coordinate histamine. The segment at 107-112 (DYVAST) is important for agonist binding. At 124–144 (DRYRSVQQPLRYLKYRTKTRA) the chain is on the cytoplasmic side. Phosphothreonine occurs at positions 140 and 142. The chain crosses the membrane as a helical span at residues 145–164 (SATILGAWFLSFLWVIPILG). At 165-188 (WNHFMQQTSVRREDKCETDFYDVT) the chain is on the extracellular side. Residues 189–211 (WFKVMTAIINFYLPTLLMLWFYA) traverse the membrane as a helical segment. Position 198 (Asn-198) interacts with histamine. The Cytoplasmic portion of the chain corresponds to 212 to 416 (KIYKAVRQHC…MNRERKAAKQ (205 aa)). Position 230 is a phosphoserine (Ser-230). Over residues 238–261 (KLRPENPKGDAKKPGKESPWEVLK) the composition is skewed to basic and acidic residues. Residues 238-292 (KLRPENPKGDAKKPGKESPWEVLKRKPKDAGGGSVLKSPSQTPKEMKSPVVFSQE) are disordered. Thr-279 carries the post-translational modification Phosphothreonine. Ser-344 and Ser-347 each carry phosphoserine. The tract at residues 345-377 (EISEDQMLGDSQSFSRTDSDTTTETASGKGKLR) is disordered. Residues 353–370 (GDSQSFSRTDSDTTTETA) show a composition bias toward polar residues. Phosphoserine occurs at positions 380, 396, and 398. The chain crosses the membrane as a helical span at residues 417-440 (LGFIMAAFILCWIPYFIFFMVIAF). The interval 424-428 (FILCW) is important for agonist binding. Position 431 (Tyr-431) interacts with histamine. Cys-441 and Cys-444 are disulfide-bonded. Over 441–446 (CKNCCN) the chain is Extracellular. The helical transmembrane segment at 447-469 (EHLHMFTIWLGYINSTLNPLIYP) threads the bilayer. The Cytoplasmic segment spans residues 470–487 (LCNENFKKTFKRILHIRS).

Belongs to the G-protein coupled receptor 1 family. Phosphorylation at sites in the second and third cytoplasmic loops independently contribute to agonist-induced receptor down-regulation.

The protein resides in the cell membrane. In terms of biological role, G-protein-coupled receptor for histamine, a biogenic amine that functions as an immune modulator and a neurotransmitter. Through the H1 receptor, histamine mediates the contraction of smooth muscles and increases capillary permeability due to contraction of terminal venules. Also mediates neurotransmission in the central nervous system and thereby regulates circadian rhythms, emotional and locomotor activities as well as cognitive functions. The protein is Histamine H1 receptor of Gorilla gorilla gorilla (Western lowland gorilla).